Consider the following 244-residue polypeptide: Probable 2-phosphosulfolactate phosphatase (244 aa).

The protein belongs to the ComB family. Mg(2+) serves as cofactor.

It carries out the reaction (2R)-O-phospho-3-sulfolactate + H2O = (2R)-3-sulfolactate + phosphate. The sequence is that of Probable 2-phosphosulfolactate phosphatase from Thermosynechococcus vestitus (strain NIES-2133 / IAM M-273 / BP-1).